The chain runs to 344 residues: 17-beta-hydroxysteroid dehydrogenase type 1 (344 aa).

Residue 3–32 coordinates NAD(+); the sequence is PTVVLITGCSSGIGMHLAVRLASDRSQSFK. NADP(+)-binding positions include 10 to 38 and aspartate 66; that span reads GCSSGIGMHLAVRLASDRSQSFKVYATLR. Serine 135 is modified (phosphoserine). Residue serine 143 participates in substrate binding. Catalysis depends on tyrosine 156, which acts as the Proton acceptor. Residue lysine 160 participates in NADP(+) binding.

This sequence belongs to the short-chain dehydrogenases/reductases (SDR) family. In terms of assembly, homodimer. Exists predominantly as a homodimer but also exits as monomer.

The protein localises to the cytoplasm. The enzyme catalyses 17beta-estradiol + NAD(+) = estrone + NADH + H(+). The catalysed reaction is 17beta-estradiol + NADP(+) = estrone + NADPH + H(+). It catalyses the reaction testosterone + NADP(+) = androst-4-ene-3,17-dione + NADPH + H(+). It participates in steroid biosynthesis; estrogen biosynthesis. In terms of biological role, favors the reduction of estrogens and androgens. Converts estrone (E1) to a more potent estrogen, 17beta-estradiol (E2). Also has 20-alpha-HSD activity. Uses preferentially NADH. This Mus musculus (Mouse) protein is 17-beta-hydroxysteroid dehydrogenase type 1.